Reading from the N-terminus, the 440-residue chain is COP9 signalosome complex subunit 5 (440 aa).

Residues valine 71–lysine 218 enclose the MPN domain. Zn(2+)-binding residues include histidine 164, histidine 166, and aspartate 177. A JAMM motif motif is present at residues histidine 164–aspartate 177. A compositionally biased stretch (polar residues) spans threonine 319 to aspartate 341. Disordered regions lie at residues threonine 319 to aspartate 343 and serine 375 to glutamate 399.

It belongs to the peptidase M67A family. CSN5 subfamily. Component of a COP9 signalosome-like (CSN) complex, composed of at least RRI1/CSN5, CSN9, RRI2/CSN10, PCI8/CSN11, CSN12 and CSI1. Within this complex it probably interacts directly with CSN12. Also interacts with RPN5. It depends on a divalent metal cation as a cofactor.

Its subcellular location is the cytoplasm. It is found in the nucleus. In terms of biological role, catalytic component of the COP9 signalosome (CSN) complex that acts as an regulator of the ubiquitin (Ubl) conjugation pathway by mediating the deneddylation of the cullin subunit of SCF-type E3 ubiquitin-protein ligase complexes. The CSN complex is involved in the regulation of the mating pheromone response. The polypeptide is COP9 signalosome complex subunit 5 (RRI1) (Saccharomyces cerevisiae (strain ATCC 204508 / S288c) (Baker's yeast)).